The sequence spans 462 residues: Zinc transporter 6-B (462 aa).

Over 1–33 (MGTIYLFRKTQRSLLGKLTQEFRLVTADRRSWK) the chain is Cytoplasmic. Residues 34 to 54 (ILLFGAINVVCTGFLLTWCSS) form a helical membrane-spanning segment. Residues 55 to 64 (TNSMALTAYT) are Extracellular-facing. A helical transmembrane segment spans residues 65–85 (YLTIFDLFSLITSLISYWVMM). Residues 86–98 (KKPSPTYSFGFER) lie on the Cytoplasmic side of the membrane. Residues 99–119 (LEVLAVFASTVLAQLGALFIL) traverse the membrane as a helical segment. Over 120 to 134 (KESAERFLEQPEIHT) the chain is Extracellular. A helical transmembrane segment spans residues 135–155 (GRLLVGTFVALFFNLFTMLSI). The Cytoplasmic segment spans residues 156 to 200 (RNKPFAYVSEAASTSWLQEHVADLSRSLCGVIPGLSSIFLPRMNP). Residues 201-221 (FVLIDIAGALALCITYMLIEI) traverse the membrane as a helical segment. Residues 222-223 (NN) are Extracellular-facing. Residues 224–244 (YFAVDTASAIAIAVMTFGTMY) traverse the membrane as a helical segment. Over 245-462 (PMSVYSGKVL…TPGQFTQFRQ (218 aa)) the chain is Cytoplasmic.

The protein belongs to the cation diffusion facilitator (CDF) transporter (TC 2.A.4) family. SLC30A subfamily. Heterodimer with SLC30A5; form a functional zinc ion transmembrane transporter.

It localises to the golgi apparatus. Its subcellular location is the trans-Golgi network membrane. In terms of biological role, has probably no intrinsic transporter activity but together with SLC30A5 forms a functional zinc ion:proton antiporter heterodimer, mediating zinc entry into the lumen of organelles along the secretory pathway. As part of that zinc ion:proton antiporter, contributes to zinc ion homeostasis within the early secretory pathway and regulates the activation and folding of enzymes like alkaline phosphatases and enzymes involved in phosphatidylinositol glycan anchor biosynthesis. This Xenopus laevis (African clawed frog) protein is Zinc transporter 6-B (slc30a6-b).